Here is a 476-residue protein sequence, read N- to C-terminus: UDP-N-acetylmuramate--L-alanine ligase (476 aa).

Residue 121-127 participates in ATP binding; it reads GAHGKTT.

This sequence belongs to the MurCDEF family.

The protein resides in the cytoplasm. It catalyses the reaction UDP-N-acetyl-alpha-D-muramate + L-alanine + ATP = UDP-N-acetyl-alpha-D-muramoyl-L-alanine + ADP + phosphate + H(+). It functions in the pathway cell wall biogenesis; peptidoglycan biosynthesis. Its function is as follows. Cell wall formation. The chain is UDP-N-acetylmuramate--L-alanine ligase from Clavibacter sepedonicus (Clavibacter michiganensis subsp. sepedonicus).